The following is a 161-amino-acid chain: Putative 2'-deoxynucleoside 5'-phosphate N-hydrolase 1 (161 aa).

Substrate is bound by residues 27–33 (FLSGSIR), Y42, H60, E106, and 128–130 (SSM).

Belongs to the 2'-deoxynucleoside 5'-phosphate N-hydrolase 1 family. In terms of assembly, monomer and homodimer.

The enzyme catalyses a pyrimidine 2'-deoxyribonucleoside 5'-phosphate + H2O = a pyrimidine nucleobase + 2-deoxy-D-ribose 5-phosphate. It catalyses the reaction a purine 2'-deoxyribonucleoside 5'-phosphate + H2O = a purine nucleobase + 2-deoxy-D-ribose 5-phosphate. Its function is as follows. Catalyzes the cleavage of the N-glycosidic bond of deoxyribonucleoside 5'-monophosphates to yield deoxyribose 5-phosphate and a purine or pyrimidine base. In Methanosarcina mazei (strain ATCC BAA-159 / DSM 3647 / Goe1 / Go1 / JCM 11833 / OCM 88) (Methanosarcina frisia), this protein is Putative 2'-deoxynucleoside 5'-phosphate N-hydrolase 1.